A 301-amino-acid polypeptide reads, in one-letter code: F-actin-capping protein subunit beta (301 aa).

Position 31 is a phosphoserine (Ser-31). Lys-264 carries the post-translational modification N6-acetyllysine.

The protein belongs to the F-actin-capping protein beta subunit family. In terms of assembly, component of the F-actin capping complex, composed of a heterodimer of an alpha and a beta subunit. Subunit of dynactin, a multiprotein complex part of a tripartite complex with dynein and a adapter, such as BICDL1, BICD2 or HOOK3. The dynactin complex is built around ACTR1A/ACTB filament and consists of an actin-related filament composed of a shoulder domain, a pointed end and a barbed end. Its length is defined by its flexible shoulder domain. The soulder is composed of 2 DCTN1 subunits, 4 DCTN2 and 2 DCTN3. The 4 DCNT2 (via N-terminus) bind the ACTR1A filament and act as molecular rulers to determine the length. The pointed end is important for binding dynein-dynactin cargo adapters. Consists of 4 subunits: ACTR10, DCNT4, DCTN5 and DCTN6. The barbed end is composed of a CAPZA1:CAPZB heterodimers, which binds ACTR1A/ACTB filament and dynactin and stabilizes dynactin. Interacts with ARHGAP17. Interaction with RCSD1/CAPZIP. Component of the WASH complex, composed of F-actin-capping protein subunit alpha (CAPZA1, CAPZA2 or CAPZA3), F-actin-capping protein subunit beta (CAPZB), WASH (WASHC1, WASH2P, WASH3P, WASH4P, WASH5P or WASH6P), WASHC2 (WASHC2A or WASHC2C), WASHC3, WASHC4 and WASHC5. Interacts with ACTG1. Directly interacts with CRACD; this interaction decreases binding to actin. The isoform beta-3 is predominantly expressed in the testis. It is only detected in total sperm, sperm heads and the calyx fraction, but not in sperm tails or any supernatant fraction. Weaker expression also found in brain.

It localises to the cytoplasm. Its subcellular location is the cytoskeleton. The protein localises to the perinuclear theca. It is found in the calyx. F-actin-capping proteins bind in a Ca(2+)-independent manner to the fast growing ends of actin filaments (barbed end) thereby blocking the exchange of subunits at these ends. Unlike other capping proteins (such as gelsolin and severin), these proteins do not sever actin filaments. Plays a role in the regulation of cell morphology and cytoskeletal organization. Forms, with CAPZB, the barbed end of the fast growing ends of actin filaments in the dynactin complex and stabilizes dynactin structure. The dynactin multiprotein complex activates the molecular motor dynein for ultra-processive transport along microtubules. This chain is F-actin-capping protein subunit beta (CAPZB), found in Bos taurus (Bovine).